The chain runs to 161 residues: MTRNEKSEVIAKLESEFKDAQAIVVCDYHGLSVKKLEALRNAAREQNVKVQVIKNTLANIALKNSAKDGMSLKDTNIYLWSEDQLAVTKVVVKFEEANSEFFKIKTAYIDGEVASVDKVKALSKMPSRDELIAMLLQVWNAPIQNFTIGLNALKEKKEQSA.

Belongs to the universal ribosomal protein uL10 family. Part of the ribosomal stalk of the 50S ribosomal subunit. The N-terminus interacts with L11 and the large rRNA to form the base of the stalk. The C-terminus forms an elongated spine to which L12 dimers bind in a sequential fashion forming a multimeric L10(L12)X complex.

Its function is as follows. Forms part of the ribosomal stalk, playing a central role in the interaction of the ribosome with GTP-bound translation factors. In Campylobacter curvus (strain 525.92), this protein is Large ribosomal subunit protein uL10.